The sequence spans 214 residues: Phosphatidylcholine transfer protein (214 aa).

Met-1 carries the post-translational modification N-acetylmethionine. Residues 1–212 form the START domain; sequence MAGPAAHFSD…MVKACQNYHK (212 aa). Residues Tyr-72 and Arg-78 each contribute to the a 1,2-diacyl-sn-glycero-3-phosphocholine site. Ser-139 is modified (phosphoserine). Gln-157 is an a 1,2-diacyl-sn-glycero-3-phosphocholine binding site.

As to quaternary structure, interacts with ACOT13/THEM2.

Its subcellular location is the cytoplasm. Functionally, lipid transfer protein that promotes intermembrane transfer of phosphatidylcholines but no other phospholipids. Binds a single lipid molecule. May play a role in hepatocellular selection and transport of phosphatidylcholines during bile formation. The polypeptide is Phosphatidylcholine transfer protein (Pctp) (Rattus norvegicus (Rat)).